Consider the following 412-residue polypeptide: Tyrosine--tRNA ligase (412 aa).

The 'HIGH' region signature appears at 48 to 57; it reads PSRPDLHLGH. A 'KMSKS' region motif is present at residues 232 to 236; sequence KMSKS. K235 contributes to the ATP binding site. Residues 342–405 form the S4 RNA-binding domain; it reads VGLLNLMRHA…GKRRFARIRP (64 aa).

The protein belongs to the class-I aminoacyl-tRNA synthetase family. TyrS type 2 subfamily. In terms of assembly, homodimer.

The protein localises to the cytoplasm. The enzyme catalyses tRNA(Tyr) + L-tyrosine + ATP = L-tyrosyl-tRNA(Tyr) + AMP + diphosphate + H(+). In terms of biological role, catalyzes the attachment of tyrosine to tRNA(Tyr) in a two-step reaction: tyrosine is first activated by ATP to form Tyr-AMP and then transferred to the acceptor end of tRNA(Tyr). This chain is Tyrosine--tRNA ligase, found in Salinibacter ruber (strain DSM 13855 / M31).